A 393-amino-acid polypeptide reads, in one-letter code: S-adenosylmethionine synthase 2 (393 aa).

A Mg(2+)-binding site is contributed by Glu9. His15 is an ATP binding site. Glu43 contacts K(+). Glu56 and Gln99 together coordinate L-methionine. ATP is bound by residues 167-169 (DGK), 235-238 (SGRF), Asp246, 252-253 (RK), Ala269, Lys273, and Lys277. Residue Asp246 participates in L-methionine binding. Lys277 serves as a coordination point for L-methionine.

It belongs to the AdoMet synthase family. In terms of assembly, homotetramer. The cofactor is Mn(2+). Mg(2+) serves as cofactor. Requires Co(2+) as cofactor. It depends on K(+) as a cofactor.

Its subcellular location is the cytoplasm. It catalyses the reaction L-methionine + ATP + H2O = S-adenosyl-L-methionine + phosphate + diphosphate. It participates in amino-acid biosynthesis; S-adenosyl-L-methionine biosynthesis; S-adenosyl-L-methionine from L-methionine: step 1/1. In terms of biological role, catalyzes the formation of S-adenosylmethionine from methionine and ATP. The reaction comprises two steps that are both catalyzed by the same enzyme: formation of S-adenosylmethionine (AdoMet) and triphosphate, and subsequent hydrolysis of the triphosphate. This Vitis vinifera (Grape) protein is S-adenosylmethionine synthase 2 (METK2).